The chain runs to 176 residues: Ribosome maturation factor RimM (176 aa).

One can recognise a PRC barrel domain in the interval 99–173; that stretch reads ADEYYWHDLL…TMTITPLEGL (75 aa).

It belongs to the RimM family. As to quaternary structure, binds ribosomal protein uS19.

Its subcellular location is the cytoplasm. In terms of biological role, an accessory protein needed during the final step in the assembly of 30S ribosomal subunit, possibly for assembly of the head region. Essential for efficient processing of 16S rRNA. May be needed both before and after RbfA during the maturation of 16S rRNA. It has affinity for free ribosomal 30S subunits but not for 70S ribosomes. The polypeptide is Ribosome maturation factor RimM (Trichlorobacter lovleyi (strain ATCC BAA-1151 / DSM 17278 / SZ) (Geobacter lovleyi)).